The sequence spans 1128 residues: Transient receptor potential-gamma protein (1128 aa).

Topologically, residues 1–325 (MMEEENTIRP…MALQAVDIIR (325 aa)) are cytoplasmic. ANK repeat units follow at residues 57–86 (LGRT…DTKD) and 131–160 (PDIT…VLPM). A helical membrane pass occupies residues 326–346 (IGIMFPIFSLAYILAPYSSIG). Residues 347-403 (QTMRKPFIKFICHSASYFTFLFLLMLASQRIETFIGGWFFADSSGMLNTMEELPTKR) lie on the Extracellular side of the membrane. A helical transmembrane segment spans residues 404–424 (GAKPTFIEWLILAWVSGLIWS). Residues 425-444 (EVKQLWDVGLQEYLNDMWNV) are Cytoplasmic-facing. Residues 445–465 (IDFVTNSLYVATVALRVVSFF) traverse the membrane as a helical segment. At 466 to 492 (QVQKEMIYNSHATDLPRERWDAWDPML) the chain is on the extracellular side. The chain crosses the membrane as a helical span at residues 493–513 (ISEGLFSAANIFSSLKLVYIF). Over 514–535 (SVNPHLGPLQVSLSRMVMDIMK) the chain is Cytoplasmic. The helical transmembrane segment at 536–556 (FFFLYVLVLFAFGSGLNQLLW) threads the bilayer. Residues 557 to 629 (YYADLEKKRC…GIKIFTRFWG (73 aa)) are Extracellular-facing. A helical transmembrane segment spans residues 630 to 650 (MLMFGTYSVINIVVLLNLLIA). Residues 651–1128 (MMNHSYQLIS…SCVSTTGAIG (478 aa)) are Cytoplasmic-facing. Disordered regions lie at residues 865 to 898 (RQQS…TASS) and 1064 to 1111 (AAEA…SVNS). Over residues 878 to 893 (ESPTTPTAPQGTQGAA) the composition is skewed to low complexity. A compositionally biased stretch (polar residues) spans 1085–1111 (TQSQHDSVETNSTFTLSIDPSNTSVNS).

This sequence belongs to the transient receptor (TC 1.A.4) family. STrpC subfamily. As to quaternary structure, interacts preferentially with trpl and interacts to a lower extent with trp. In terms of tissue distribution, expressed predominantly in the rhabdomeres of photoreceptor cells.

Its subcellular location is the cell projection. The protein localises to the rhabdomere membrane. A light-sensitive calcium channel that is required for inositide-mediated Ca(2+) entry in the retina during phospholipase C (PLC)-mediated phototransduction. Forms a regulated cation channel when heteromultimerized with trpl. The protein is Transient receptor potential-gamma protein (Trpgamma) of Drosophila melanogaster (Fruit fly).